Reading from the N-terminus, the 258-residue chain is Thiazole synthase (258 aa).

Residue K98 is the Schiff-base intermediate with DXP of the active site. 1-deoxy-D-xylulose 5-phosphate is bound by residues G159, A185–G186, and N207–T208.

Belongs to the ThiG family. Homotetramer. Forms heterodimers with either ThiH or ThiS.

It is found in the cytoplasm. The catalysed reaction is [ThiS sulfur-carrier protein]-C-terminal-Gly-aminoethanethioate + 2-iminoacetate + 1-deoxy-D-xylulose 5-phosphate = [ThiS sulfur-carrier protein]-C-terminal Gly-Gly + 2-[(2R,5Z)-2-carboxy-4-methylthiazol-5(2H)-ylidene]ethyl phosphate + 2 H2O + H(+). It functions in the pathway cofactor biosynthesis; thiamine diphosphate biosynthesis. Functionally, catalyzes the rearrangement of 1-deoxy-D-xylulose 5-phosphate (DXP) to produce the thiazole phosphate moiety of thiamine. Sulfur is provided by the thiocarboxylate moiety of the carrier protein ThiS. In vitro, sulfur can be provided by H(2)S. This chain is Thiazole synthase, found in Cytophaga hutchinsonii (strain ATCC 33406 / DSM 1761 / CIP 103989 / NBRC 15051 / NCIMB 9469 / D465).